A 192-amino-acid polypeptide reads, in one-letter code: Ion-translocating oxidoreductase complex subunit B (192 aa).

The segment at 1 to 26 (MNTIWIAVAAISLLGLAFGAILGYAS) is hydrophobic. A 4Fe-4S domain is found at 32 to 91 (EDDPVVEKIDEILPQSQCGQCGYPGCRPYAEAISCNGEKINRCAPGGEAVMLKISELLNV). The [4Fe-4S] cluster site is built by Cys49, Cys52, Cys57, Cys74, Cys117, Cys120, Cys123, Cys127, Cys147, Cys150, Cys153, and Cys157. 4Fe-4S ferredoxin-type domains lie at 108–137 (VVAVIDENNCIGCTKCIQACPVDAIVGATR) and 138–167 (AMHTVMSDLCTGCNLCVDPCPTQCISLQPV).

Belongs to the 4Fe4S bacterial-type ferredoxin family. RnfB subfamily. In terms of assembly, the complex is composed of six subunits: RsxA, RsxB, RsxC, RsxD, RsxE and RsxG. It depends on [4Fe-4S] cluster as a cofactor.

The protein localises to the cell inner membrane. In terms of biological role, part of a membrane-bound complex that couples electron transfer with translocation of ions across the membrane. Required to maintain the reduced state of SoxR. This is Ion-translocating oxidoreductase complex subunit B from Escherichia fergusonii (strain ATCC 35469 / DSM 13698 / CCUG 18766 / IAM 14443 / JCM 21226 / LMG 7866 / NBRC 102419 / NCTC 12128 / CDC 0568-73).